Consider the following 237-residue polypeptide: Ergosterol biosynthesis protein 29 (237 aa).

Residues 36–56 (ITLFLIVVGTLAFFNELYITI) form a helical membrane-spanning segment.

It is found in the endoplasmic reticulum membrane. Part of the third module of ergosterol biosynthesis pathway that includes the late steps of the pathway. ERG29 regulates the activity of the iron-containing C4-methylsterol oxidase ERG25. The third module or late pathway involves the ergosterol synthesis itself through consecutive reactions that mainly occur in the endoplasmic reticulum (ER) membrane. Firstly, the squalene synthase ERG9 catalyzes the condensation of 2 farnesyl pyrophosphate moieties to form squalene, which is the precursor of all steroids. Squalene synthase is crucial for balancing the incorporation of farnesyl diphosphate (FPP) into sterol and nonsterol isoprene synthesis. Secondly, the squalene epoxidase ERG1 catalyzes the stereospecific oxidation of squalene to (S)-2,3-epoxysqualene, which is considered to be a rate-limiting enzyme in steroid biosynthesis. Then, the lanosterol synthase ERG7 catalyzes the cyclization of (S)-2,3 oxidosqualene to lanosterol, a reaction that forms the sterol core. In the next steps, lanosterol is transformed to zymosterol through a complex process involving various demethylation, reduction and desaturation reactions. The lanosterol 14-alpha-demethylase ERG11 (also known as CYP51) catalyzes C14-demethylation of lanosterol to produce 4,4'-dimethyl cholesta-8,14,24-triene-3-beta-ol, which is critical for ergosterol biosynthesis. The C-14 reductase ERG24 reduces the C14=C15 double bond of 4,4-dimethyl-cholesta-8,14,24-trienol to produce 4,4-dimethyl-cholesta-8,24-dienol. 4,4-dimethyl-cholesta-8,24-dienol is substrate of the C-4 demethylation complex ERG25-ERG26-ERG27 in which ERG25 catalyzes the three-step monooxygenation required for the demethylation of 4,4-dimethyl and 4alpha-methylsterols, ERG26 catalyzes the oxidative decarboxylation that results in a reduction of the 3-beta-hydroxy group at the C-3 carbon to an oxo group, and ERG27 is responsible for the reduction of the keto group on the C-3. ERG28 has a role as a scaffold to help anchor ERG25, ERG26 and ERG27 to the endoplasmic reticulum and ERG29 regulates the activity of the iron-containing C4-methylsterol oxidase ERG25. Then, the sterol 24-C-methyltransferase ERG6 catalyzes the methyl transfer from S-adenosyl-methionine to the C-24 of zymosterol to form fecosterol. The C-8 sterol isomerase ERG2 catalyzes the reaction which results in unsaturation at C-7 in the B ring of sterols and thus converts fecosterol to episterol. The sterol-C5-desaturase ERG3 then catalyzes the introduction of a C-5 double bond in the B ring to produce 5-dehydroepisterol. The C-22 sterol desaturase ERG5 further converts 5-dehydroepisterol into ergosta-5,7,22,24(28)-tetraen-3beta-ol by forming the C-22(23) double bond in the sterol side chain. Finally, ergosta-5,7,22,24(28)-tetraen-3beta-ol is substrate of the C-24(28) sterol reductase ERG4 to produce ergosterol. Its function is as follows. Plays a role in maintaining mitochondrial and plasma membrane integrity and consequently impacting the iron homeostasis, respiratory metabolism and antioxidant response. The chain is Ergosterol biosynthesis protein 29 from Saccharomyces cerevisiae (strain ATCC 204508 / S288c) (Baker's yeast).